Reading from the N-terminus, the 266-residue chain is Very-long-chain aldehyde decarbonylase GL1-11 (266 aa).

4 helical membrane passes run 25–45, 74–94, 106–126, and 163–183; these read VVTF…SLLF, ILYH…AFKF, WTVI…IFYW, and ILFL…HLFT. The 136-residue stretch at 113 to 248 folds into the Fatty acid hydroxylase domain; the sequence is VLFYFVLEDF…FVYMDWLFGT (136 aa).

Belongs to the sterol desaturase family. As to quaternary structure, homodimer.

The protein localises to the endoplasmic reticulum membrane. It carries out the reaction a long-chain fatty aldehyde + 2 NADPH + O2 + H(+) = a long-chain alkane + formate + 2 NADP(+) + H2O. In terms of biological role, aldehyde decarbonylase involved in the conversion of aldehydes to alkanes. Core component of a very-long-chain alkane synthesis complex. This is Very-long-chain aldehyde decarbonylase GL1-11 from Oryza sativa subsp. indica (Rice).